The chain runs to 429 residues: Adenylosuccinate synthetase (429 aa).

GTP contacts are provided by residues 12-18 (GDEGKGK) and 40-42 (GHT). The Proton acceptor role is filled by Asp13. Mg(2+) contacts are provided by Asp13 and Gly40. Residues 13–16 (DEGK), 38–41 (NAGH), Thr129, Arg143, Gln224, Thr239, and Arg303 each bind IMP. His41 functions as the Proton donor in the catalytic mechanism. 299-305 (ATTGRKR) contributes to the substrate binding site. Residues Arg305, 331 to 333 (KLD), and 413 to 415 (SVG) each bind GTP.

The protein belongs to the adenylosuccinate synthetase family. As to quaternary structure, homodimer. Requires Mg(2+) as cofactor.

The protein resides in the cytoplasm. The enzyme catalyses IMP + L-aspartate + GTP = N(6)-(1,2-dicarboxyethyl)-AMP + GDP + phosphate + 2 H(+). It participates in purine metabolism; AMP biosynthesis via de novo pathway; AMP from IMP: step 1/2. Functionally, plays an important role in the de novo pathway of purine nucleotide biosynthesis. Catalyzes the first committed step in the biosynthesis of AMP from IMP. In Desulfosudis oleivorans (strain DSM 6200 / JCM 39069 / Hxd3) (Desulfococcus oleovorans), this protein is Adenylosuccinate synthetase.